Reading from the N-terminus, the 881-residue chain is MMQQYIEIKAAHADCLLFYRMGDFYELFFDDAEVASRALGITLTKRGKHRGEDIPMCGVPVHAADDYLQKLIALGHRVAVCEQMEDPAEAKKRGYKAVMRRDVVRLVTPGTITEEKLLDPSEANYLMALGRVKGSEELALAWIDISTGIFRVASTAPDRLLADISRIDPRELIVAEPVYHDAELRPVFDMLGRVVVPQPPVFFDSASAAMRLSRFYGVATLDGFGRFSRAELSAIAGAVAYVEKTQKAERPPLAAPERDEEGKSLFIDPSTRANLELARTLSSSREGSLLKAIDRTVTGAGSRLLAERLMSPLTDPQVIAERLDSVSFFLDEPGLRDRLRAFLKGVPDISRALSRLALNRGGPRDLGALSAGLEAAAAAADLLRGKEAPSEISAALSTLLSLPAALVSHLDRALADDLPLLKRDGGFVRGGYDAELDEMRALRDQSRRVIAGMERDLIEETGIRSLKIRHNNILGYYIEVRANNAGALNGTDEAKARFIHRQTMANAMRFTTTELADLETRIANAADRALAIELAVFERLVGEVVAASEPLRAAAQALAVLDVSAALACLAEGEDYCRPVVDGSLDFHIEGGRHPVVEQALRKQLGEPFVANDCDLSPAEGEKAGAIWLLTGPNMGGKSTFLRQNALIAVLAQMGSFVPARSARIGVVDRLFSRVGASDDLARGRSTFMVEMVETAAILNQAGERSLVILDEIGRGTATFDGLSIAWAAVEYLHEKNRCRALFATHFHEMTALTEKLSRLVNVTMRVKEFEGEVIFLHEVARGAADRSYGIQVARLAGLPQTVVERARDVLHRLEEGETGTKAARIVDDLPLFSAAMRQEPPKSKAPDHLREELTALNPDDMTPREALEVLYKLKRLVIEG.

Residue 632–639 coordinates ATP; it reads GPNMGGKS.

The protein belongs to the DNA mismatch repair MutS family.

Functionally, this protein is involved in the repair of mismatches in DNA. It is possible that it carries out the mismatch recognition step. This protein has a weak ATPase activity. The polypeptide is DNA mismatch repair protein MutS (Chelativorans sp. (strain BNC1)).